We begin with the raw amino-acid sequence, 217 residues long: RING-H2 finger protein ATL70 (217 aa).

The chain crosses the membrane as a helical span at residues 61–81; the sequence is IGGFRYGIGVSIGVLLLITTI. The RING-type; atypical zinc-finger motif lies at 147 to 189; that stretch reads CAICLGDYKGKHLLRQLPDCNHLFHLKCIDTWLRLNPTCPVCR.

The protein belongs to the RING-type zinc finger family. ATL subfamily.

It is found in the membrane. The enzyme catalyses S-ubiquitinyl-[E2 ubiquitin-conjugating enzyme]-L-cysteine + [acceptor protein]-L-lysine = [E2 ubiquitin-conjugating enzyme]-L-cysteine + N(6)-ubiquitinyl-[acceptor protein]-L-lysine.. It functions in the pathway protein modification; protein ubiquitination. The polypeptide is RING-H2 finger protein ATL70 (ATL70) (Arabidopsis thaliana (Mouse-ear cress)).